A 255-amino-acid chain; its full sequence is Segregation and condensation protein A (255 aa).

It belongs to the ScpA family. Component of a cohesin-like complex composed of ScpA, ScpB and the Smc homodimer, in which ScpA and ScpB bind to the head domain of Smc. The presence of the three proteins is required for the association of the complex with DNA.

The protein localises to the cytoplasm. Participates in chromosomal partition during cell division. May act via the formation of a condensin-like complex containing Smc and ScpB that pull DNA away from mid-cell into both cell halves. This is Segregation and condensation protein A from Lactiplantibacillus plantarum (strain ATCC BAA-793 / NCIMB 8826 / WCFS1) (Lactobacillus plantarum).